A 725-amino-acid chain; its full sequence is Eukaryotic translation initiation factor 3 subunit B (725 aa).

S23 bears the Phosphoserine mark. Residues 39–129 (TVVVIEGAPV…HTFVVRKLNQ (91 aa)) form the RRM domain. S135 is modified (phosphoserine). At T136 the chain carries Phosphothreonine. 3 WD repeats span residues 190-229 (DRENWTETYVQWSPMGTYLVSLHLRGIQLWGGESWGMCAR), 304-344 (DGKK…LVDK), and 347-386 (IKIDGVQNFEWCPVSDALGRDSKEQLLAYWTPEITNQPAR). The stretch at 630–671 (LTKEDMKKIRKKLKDYNRLFDEEDIAEQSSANRELAARRRQL) forms a coiled coil.

The protein belongs to the eIF-3 subunit B family. Component of the eukaryotic translation initiation factor 3 (eIF-3) complex. The eIF-3 complex appears to include tif32/eif3a, SPAC25G10.08/eif3b, tif33/eif3c, SPBC4C3.07/eif3f, tif35/eif3g and sum1/eif3i. This set of common subunits may also associate exclusively with either moe1/eif3d and int6/eif3e, or with SPAC821.05/eif3h and SPAC1751.03/eif3m. The eIF-3 complex may also include SPAC3A12.13c/eif3j.

It is found in the cytoplasm. Its function is as follows. RNA-binding component of the eukaryotic translation initiation factor 3 (eIF-3) complex, which is involved in protein synthesis of a specialized repertoire of mRNAs and, together with other initiation factors, stimulates binding of mRNA and methionyl-tRNAi to the 40S ribosome. The eIF-3 complex specifically targets and initiates translation of a subset of mRNAs involved in cell proliferation. This chain is Eukaryotic translation initiation factor 3 subunit B, found in Schizosaccharomyces pombe (strain 972 / ATCC 24843) (Fission yeast).